A 75-amino-acid chain; its full sequence is Beta-defensin 30 (75 aa).

The signal sequence occupies residues 1–22; it reads MGSLQLTLVLFVLLSYVPPVRS. 3 disulfide bridges follow: cysteine 35/cysteine 62, cysteine 42/cysteine 56, and cysteine 46/cysteine 63.

It belongs to the beta-defensin family.

The protein resides in the secreted. Has antibacterial activity. This chain is Beta-defensin 30 (Defb30), found in Mus musculus (Mouse).